The following is a 219-amino-acid chain: 7-cyano-7-deazaguanine synthase (219 aa).

11–21 (FSGGQDSTTCL) lines the ATP pocket. Cys-188, Cys-196, Cys-199, and Cys-202 together coordinate Zn(2+).

This sequence belongs to the QueC family. Zn(2+) is required as a cofactor.

The catalysed reaction is 7-carboxy-7-deazaguanine + NH4(+) + ATP = 7-cyano-7-deazaguanine + ADP + phosphate + H2O + H(+). It functions in the pathway purine metabolism; 7-cyano-7-deazaguanine biosynthesis. Functionally, catalyzes the ATP-dependent conversion of 7-carboxy-7-deazaguanine (CDG) to 7-cyano-7-deazaguanine (preQ(0)). This chain is 7-cyano-7-deazaguanine synthase, found in Glaesserella parasuis serovar 5 (strain SH0165) (Haemophilus parasuis).